The sequence spans 225 residues: Lectin (225 aa).

In terms of assembly, homotetramer.

Functionally, chitin-binding lectin. Agglutinates rabbit erythrocytes, but not human erythrocytes. The chain is Lectin from Vachellia farnesiana (Sweet acacia).